A 289-amino-acid polypeptide reads, in one-letter code: Ribosomal protein L11 methyltransferase (289 aa).

Thr142, Gly163, Asp185, and Asn226 together coordinate S-adenosyl-L-methionine.

Belongs to the methyltransferase superfamily. PrmA family.

It localises to the cytoplasm. It catalyses the reaction L-lysyl-[protein] + 3 S-adenosyl-L-methionine = N(6),N(6),N(6)-trimethyl-L-lysyl-[protein] + 3 S-adenosyl-L-homocysteine + 3 H(+). In terms of biological role, methylates ribosomal protein L11. The polypeptide is Ribosomal protein L11 methyltransferase (Legionella pneumophila (strain Corby)).